Reading from the N-terminus, the 328-residue chain is MVFSTLEHILTHISFSVVSLLISIHLITLLLGNEIIGLDNSFKKGMIITFFCITGLLVTRWIFSGHLPFSNLYESLIFLSWTFSIFYMVLCLKKKKNYYFNTIITPSILFTQGFATSGLLTEMHQSLILVPALQSHWLMMHVSMMILGYTTLLCGSLLSVAILVITFQELIHMIGKSKTFFFFNETLSFAEIKYMNMNDKKNLLQKTPFMSDSSYINYYRYQFIQQLDRWGYRTISLGFIFLTVGNISGAVWANEAWGSYWNWDPKETWAFITWIIFAIYLHIRKNKKLEYLNSSIVASMGFLIIWICYLGINLLGIGLHSYGSFTSN.

Helical transmembrane passes span 12–32, 45–65, 72–92, 100–120, 145–165, 234–254, 263–283, and 296–316; these read HISFSVVSLLISIHLITLLLG, GMIITFFCITGLLVTRWIFSG, LYESLIFLSWTFSIFYMVLCL, FNTIITPSILFTQGFATSGLL, MILGYTTLLCGSLLSVAILVI, TISLGFIFLTVGNISGAVWAN, WDPKETWAFITWIIFAIYLHI, and IVASMGFLIIWICYLGINLLG.

Belongs to the CcmF/CycK/Ccl1/NrfE/CcsA family. In terms of assembly, may interact with Ccs1.

It localises to the plastid. It is found in the chloroplast thylakoid membrane. Its function is as follows. Required during biogenesis of c-type cytochromes (cytochrome c6 and cytochrome f) at the step of heme attachment. The polypeptide is Cytochrome c biogenesis protein CcsA (Phaseolus vulgaris (Kidney bean)).